The sequence spans 482 residues: Major cardiolipin synthase ClsA (482 aa).

Helical transmembrane passes span 3–23 (ISSILLSLFFILNILLAIIVI) and 34–54 (WAWLLVLFFIPVLGFILYLLF). PLD phosphodiesterase domains are found at residues 217–244 (LNYRNHRKLVIIDGMTGYVGGFNVGDEY) and 395–422 (DNGFIHAKTIVVDDEIASVGTANIDVRS). Residues histidine 222, lysine 224, aspartate 229, histidine 400, lysine 402, and aspartate 407 contribute to the active site.

Belongs to the phospholipase D family. Cardiolipin synthase subfamily.

It localises to the cell membrane. It carries out the reaction 2 a 1,2-diacyl-sn-glycero-3-phospho-(1'-sn-glycerol) = a cardiolipin + glycerol. Catalyzes the reversible phosphatidyl group transfer from one phosphatidylglycerol molecule to another to form cardiolipin (CL) (diphosphatidylglycerol) and glycerol. The sequence is that of Major cardiolipin synthase ClsA (clsA) from Bacillus subtilis (strain 168).